Reading from the N-terminus, the 529-residue chain is MFFKNLFPFSIMGGICRKVVLSPTSLFIPTNGDTITADGQEVLFAYPNNCLFVKDLTKVVRNKTIIQEKKYDENHYIIYYDNKELFLPKQIWEPVKSAVNAFIEKGYLDGGILLYGAPGMGKSELAKLISKWLGIGMIQKRADDIMSKYLGESEQNMARLFKEEIPQNLPTIVFMDEVDWLGVRRRFGSTTADTASTTVGQILTVFLQLFQDEVIEKRLPVLFIATTNARLEDLDDAFKRRFPFKIYFTPPSQEMIEYFTDKYIKKTGKDTFVVHGKQLSKKQFVNFIVGTGISIAEFKTLLETQSFDSISSSSTYLRRVIPADIPEKVFDATRVKLNGYISFNCDDFNGRTKFHVASFPWISWAILGSYIMLQCKKPIFELLPTDNLSVEELVSGLKQYEPTFFLMFSSSRDDYRLAILASRLKRERGIDVVFFSEDNKLFPESVMLTPYYDISNISFVNEEEKKQLIDTVIHFYGVEAKPDELNILISSRIKGGNSTSDFLNSLQTYILAKSKITDTEKVKDVVKLY.

Residues 354 to 373 (FHVASFPWISWAILGSYIML) form a helical membrane-spanning segment.

The protein localises to the host membrane. This is an uncharacterized protein from Acidianus convivator (ATV).